A 47-amino-acid chain; its full sequence is PhoP/PhoQ regulator MgrB (47 aa).

The helical transmembrane segment at 6 to 26 (WAILLAVLVACLLLWMQTLNV) threads the bilayer.

Belongs to the MgrB family. As to quaternary structure, may form homooligomers. Probably interacts with the periplasmic domain of PhoQ.

Its subcellular location is the cell inner membrane. PhoP-regulated transcription is redox-sensitive, being activated when the periplasm becomes more reducing. MgrB acts between DsbA/DsbB and PhoP/PhoQ in this pathway. Represses PhoP/PhoQ signaling, possibly by binding to the periplasmic domain of PhoQ, altering its activity and that of downstream effector PhoP. This is PhoP/PhoQ regulator MgrB from Cronobacter sakazakii (strain ATCC BAA-894) (Enterobacter sakazakii).